The chain runs to 495 residues: MAARAIMFQGTGSDVGKSLMVAGLARALTLRGLTVAPFKPQNMSNNAAVTADGGEIGRAQALQARAARRPMTVHMNPVLLKPQSEVGSQVVVQGRVIGNAKASAYQAMKPQLMAAVLESFHRLAADADIVLVEGAGSASEINLRAGDIANMGFAQATQTPVVIIGDIDRGGVIASLVGTKAVLAPDDAALVAGFLVNRFRGDPALFAAGMNEIAARTGWASLGLIPHFSDARRLPAEDALGLPGHGAAGGQRPKVVVLAYPRISNFDEFDPLRLEDGIDLQFLRPGTPIPGDAAVAILPGSKATIADLQALRETGWDIDLSAHLRRGGRVLGICGGYQMLGRKISDPDGHEGAPGSVAGLGLLDVETTLTDDKALREVHGALTEDQIPFRGYEMHIGRTDGPTARAPFLTFADGRSDGAVAREGQIAGCYVHGLFADDGLRAHWLGRLGAVTTGLAYESDVEATLDGLAAHLERHVNVSGILALARRPTPRPTAP.

The GATase cobBQ-type domain maps to 252-440; the sequence is RPKVVVLAYP…VHGLFADDGL (189 aa). Cysteine 334 functions as the Nucleophile in the catalytic mechanism. Histidine 432 is a catalytic residue.

Belongs to the CobB/CobQ family. CobQ subfamily.

The protein operates within cofactor biosynthesis; adenosylcobalamin biosynthesis. In terms of biological role, catalyzes amidations at positions B, D, E, and G on adenosylcobyrinic A,C-diamide. NH(2) groups are provided by glutamine, and one molecule of ATP is hydrogenolyzed for each amidation. This Bradyrhizobium sp. (strain ORS 278) protein is Cobyric acid synthase.